We begin with the raw amino-acid sequence, 114 residues long: Iron-sulfur cluster insertion protein ErpA (114 aa).

Iron-sulfur cluster-binding residues include Cys42, Cys106, and Cys108.

Belongs to the HesB/IscA family. As to quaternary structure, homodimer. Iron-sulfur cluster serves as cofactor.

Required for insertion of 4Fe-4S clusters for at least IspG. The chain is Iron-sulfur cluster insertion protein ErpA from Klebsiella pneumoniae subsp. pneumoniae (strain ATCC 700721 / MGH 78578).